A 367-amino-acid chain; its full sequence is Adenine deaminase (367 aa).

Zn(2+)-binding residues include H19, H21, and H209. The Proton donor role is filled by E212. D290 lines the Zn(2+) pocket. D291 lines the substrate pocket.

Belongs to the metallo-dependent hydrolases superfamily. Adenosine and AMP deaminases family. Adenine deaminase type 2 subfamily. Zn(2+) serves as cofactor.

The protein localises to the cytoplasm. The protein resides in the nucleus. It carries out the reaction adenine + H2O + H(+) = hypoxanthine + NH4(+). Its function is as follows. Catalyzes the hydrolytic deamination of adenine to hypoxanthine. Plays an important role in the purine salvage pathway and in nitrogen catabolism. Also exhibits a low activity towards N(6)-substituted adenines that are commonly known as the plant hormones cytokinins. This Schizosaccharomyces pombe (strain 972 / ATCC 24843) (Fission yeast) protein is Adenine deaminase.